Here is a 404-residue protein sequence, read N- to C-terminus: MKKGDVKKVVLAYSGGLDTSIILRWLQDEYDCEVVTFTADIGQGEELEPARQKAEMMGIKEIYIEDLREEFVRDYVFPMFRANTLYEGVYLLGTSIARPLIGKRLVEIAEATGADAVSHGATGKGNDQVRFELTAYALKPDIKIIAPWRTWDLHSRTKLIEYAMRHQIPVPKDKHGEAPYSMDANLLHISYEGKALENPWTEPSEDMFRLTVSPEAAPDKAQYIEVDFERGDAVAIDGEKLTPAALLAKLNEIGGRHGVGRLDLVENRYVGMKSRGVYETPGGTILQVAHRAVESLTLDREVMHLRDELMPRYAKLIYNGFWFAPERLMLQAAIDQTQQTVTGTARLKLYKGNVSVVGRKAAKSLYRMDYVTFEEDTVYDQHDAEGFIKLNALRLRLGKMARDS.

Residues 12-20 and alanine 39 contribute to the ATP site; that span reads AYSGGLDTS. L-citrulline is bound by residues tyrosine 90 and serine 95. An ATP-binding site is contributed by glycine 120. Threonine 122, asparagine 126, and aspartate 127 together coordinate L-aspartate. Asparagine 126 lines the L-citrulline pocket. L-citrulline-binding residues include arginine 130, serine 181, serine 190, glutamate 266, and tyrosine 278.

The protein belongs to the argininosuccinate synthase family. Type 1 subfamily. As to quaternary structure, homotetramer.

Its subcellular location is the cytoplasm. It catalyses the reaction L-citrulline + L-aspartate + ATP = 2-(N(omega)-L-arginino)succinate + AMP + diphosphate + H(+). It participates in amino-acid biosynthesis; L-arginine biosynthesis; L-arginine from L-ornithine and carbamoyl phosphate: step 2/3. The chain is Argininosuccinate synthase from Rhodospirillum rubrum (strain ATCC 11170 / ATH 1.1.1 / DSM 467 / LMG 4362 / NCIMB 8255 / S1).